We begin with the raw amino-acid sequence, 453 residues long: Bifunctional protein GlmU (453 aa).

The interval 1 to 225 is pyrophosphorylase; the sequence is MNIVILAAGT…EWETLGVNSK (225 aa). UDP-N-acetyl-alpha-D-glucosamine contacts are provided by residues 6-9, Lys-20, Gln-71, 76-77, 98-100, Gly-135, Glu-150, Asn-165, and Asn-223; these read LAAG, GT, and YGD. A Mg(2+)-binding site is contributed by Asp-100. Asn-223 lines the Mg(2+) pocket. The interval 226–246 is linker; sequence QQLAELERIHQRNVADDLLVA. The N-acetyltransferase stretch occupies residues 247–453; that stretch reads GVTIADPARI…GYVRPTKKKS (207 aa). 2 residues coordinate UDP-N-acetyl-alpha-D-glucosamine: Arg-329 and Lys-347. His-359 serves as the catalytic Proton acceptor. UDP-N-acetyl-alpha-D-glucosamine-binding residues include Tyr-362 and Asn-373. Residues Ala-376, 382–383, Ser-401, and Ala-419 each bind acetyl-CoA; that span reads NY.

This sequence in the N-terminal section; belongs to the N-acetylglucosamine-1-phosphate uridyltransferase family. The protein in the C-terminal section; belongs to the transferase hexapeptide repeat family. Homotrimer. Mg(2+) is required as a cofactor.

It is found in the cytoplasm. It carries out the reaction alpha-D-glucosamine 1-phosphate + acetyl-CoA = N-acetyl-alpha-D-glucosamine 1-phosphate + CoA + H(+). The catalysed reaction is N-acetyl-alpha-D-glucosamine 1-phosphate + UTP + H(+) = UDP-N-acetyl-alpha-D-glucosamine + diphosphate. It functions in the pathway nucleotide-sugar biosynthesis; UDP-N-acetyl-alpha-D-glucosamine biosynthesis; N-acetyl-alpha-D-glucosamine 1-phosphate from alpha-D-glucosamine 6-phosphate (route II): step 2/2. It participates in nucleotide-sugar biosynthesis; UDP-N-acetyl-alpha-D-glucosamine biosynthesis; UDP-N-acetyl-alpha-D-glucosamine from N-acetyl-alpha-D-glucosamine 1-phosphate: step 1/1. The protein operates within bacterial outer membrane biogenesis; LPS lipid A biosynthesis. Functionally, catalyzes the last two sequential reactions in the de novo biosynthetic pathway for UDP-N-acetylglucosamine (UDP-GlcNAc). The C-terminal domain catalyzes the transfer of acetyl group from acetyl coenzyme A to glucosamine-1-phosphate (GlcN-1-P) to produce N-acetylglucosamine-1-phosphate (GlcNAc-1-P), which is converted into UDP-GlcNAc by the transfer of uridine 5-monophosphate (from uridine 5-triphosphate), a reaction catalyzed by the N-terminal domain. This chain is Bifunctional protein GlmU, found in Paraburkholderia phymatum (strain DSM 17167 / CIP 108236 / LMG 21445 / STM815) (Burkholderia phymatum).